The following is a 226-amino-acid chain: MFSSAVRALCRTVPTVATRQLSTSRALLSLRPLGPKNTVPAFKGTAVVDGDFKVISDQDYKGKWLVMFFYPLDFTFVCPTEIIAYGDRANEFRSLGAEVVACSCDSHFSHLAWVNTPRKDGGLGDMDIPLLADFNKKIADSFGVLDKESGLSYRGLFLIDPSGTVRHTTCNDLPVGRSVDETLRVLKAFQFSDKHGEVCPADWHEDSPTIKPGVATSKEYFNKVNK.

A Thioredoxin domain is found at 33–191 (LGPKNTVPAF…TLRVLKAFQF (159 aa)). The Cysteine sulfenic acid (-SOH) intermediate role is filled by cysteine 78.

It belongs to the peroxiredoxin family. AhpC/Prx1 subfamily. Homodimer; disulfide-linked, upon oxidation.

It catalyses the reaction a hydroperoxide + [thioredoxin]-dithiol = an alcohol + [thioredoxin]-disulfide + H2O. Its function is as follows. Thiol-specific peroxidase that catalyzes the reduction of hydrogen peroxide and organic hydroperoxides to water and alcohols, respectively. Plays a role in cell protection against oxidative stress by detoxifying peroxides and as sensor of hydrogen peroxide-mediated signaling events. In Caenorhabditis elegans, this protein is Probable peroxiredoxin prdx-3 (prdx-3).